A 514-amino-acid chain; its full sequence is Pantothenate transporter liz1 (514 aa).

A run of 12 helical transmembrane segments spans residues 24–44 (LLIK…FINY), 72–92 (INVV…YALQ), 98–118 (LWFS…FAVH), 128–148 (FFMA…LGAW), 159–179 (GIFS…QTAV), 194–214 (WLFI…LFLF), 263–283 (GLCI…NVLM), 300–320 (NYPT…SVIS), 329–349 (WPFG…LLAW), 357–377 (FFAY…FSWA), 390–410 (VVVF…APIM), and 423–443 (LIGL…VSYM).

It belongs to the major facilitator superfamily. Allantoate permease family.

It localises to the cell membrane. In terms of biological role, transports pantothenate into the cell. The polypeptide is Pantothenate transporter liz1 (liz1) (Schizosaccharomyces pombe (strain 972 / ATCC 24843) (Fission yeast)).